Reading from the N-terminus, the 583-residue chain is L-galactono-1,4-lactone dehydrogenase 2, mitochondrial (583 aa).

A mitochondrion-targeting transit peptide spans 1 to 36 (MRRLLLAGILRRASSSPSSHHHLHLVRALSASSPLP). Positions 37–78 (ASDADLRKYAGYALLLLGCGAATYYSFPLPPDALHKKAVPFK) are cleaved as a propeptide — removed in mature form. A helical transmembrane segment spans residues 45 to 61 (YAGYALLLLGCGAATYY). The 172-residue stretch at 95 to 266 (THEVHTRVLL…AEVTLQCVER (172 aa)) folds into the FAD-binding PCMH-type domain.

It depends on FAD as a cofactor.

Its subcellular location is the mitochondrion membrane. It carries out the reaction L-galactono-1,4-lactone + 4 Fe(III)-[cytochrome c] = L-dehydroascorbate + 4 Fe(II)-[cytochrome c] + 5 H(+). The protein operates within cofactor biosynthesis; L-ascorbate biosynthesis. Its function is as follows. Involved in the biosynthesis of ascorbic acid. The protein is L-galactono-1,4-lactone dehydrogenase 2, mitochondrial (GLDH2) of Oryza sativa subsp. japonica (Rice).